Consider the following 404-residue polypeptide: uncharacterized protein (404 aa).

Polar residues predominate over residues 1-22; sequence MASSINNSSQPTVPSISNNSHG. Positions 1 to 110 are disordered; sequence MASSINNSSQ…QQTPVKRRRR (110 aa). Residue Thr-47 is modified to Phosphothreonine. The span at 87-104 shows a compositional bias: polar residues; sequence SRGSSLKSHLETESQQTP. Residues 117-166 form a PHD-type zinc finger; that stretch reads VDYCSACGGRGLFICCEGCPCSFHLSCLEPPLTPENIPEGSWFCVTCSIK.

This is an uncharacterized protein from Schizosaccharomyces pombe (strain 972 / ATCC 24843) (Fission yeast).